Consider the following 205-residue polypeptide: MSAIAPGLVLLAYLCGSISSAILVCRLAGLPDPRDSGSGNPGATNVLRIGGKGAAVAVLIFDVLKGMLPVWGAWALGLTPFWLGLVAIAACVGHIWPVFFHFRGGKGVATAFGAIAPIGLDLTGVMAGTWLLTILLSGYSSLGAIVSALIAPFYVWWFKPQYTFPVSMLSCLILLRHHDNIQRLWRRQESKIWTREKKKKTPEQK.

The next 5 membrane-spanning stretches (helical) occupy residues 4-24, 80-100, 107-127, 130-150, and 155-175; these read IAPGLVLLAYLCGSISSAILV, PFWLGLVAIAACVGHIWPVFF, GVATAFGAIAPIGLDLTGVMA, WLLTILLSGYSSLGAIVSALI, and VWWFKPQYTFPVSMLSCLILL.

The protein belongs to the PlsY family. In terms of assembly, probably interacts with PlsX.

Its subcellular location is the cell inner membrane. It carries out the reaction an acyl phosphate + sn-glycerol 3-phosphate = a 1-acyl-sn-glycero-3-phosphate + phosphate. The protein operates within lipid metabolism; phospholipid metabolism. In terms of biological role, catalyzes the transfer of an acyl group from acyl-phosphate (acyl-PO(4)) to glycerol-3-phosphate (G3P) to form lysophosphatidic acid (LPA). This enzyme utilizes acyl-phosphate as fatty acyl donor, but not acyl-CoA or acyl-ACP. This chain is Glycerol-3-phosphate acyltransferase, found in Klebsiella pneumoniae subsp. pneumoniae (strain ATCC 700721 / MGH 78578).